The chain runs to 835 residues: MWLLALCLVGLAGAQRGGGGPGGGAPGGPGLGLGSLGEERFPVVNTAYGRVRGVRRELNNEILGPVVQFLGVPYATPPLGARRFQPPEAPASWPGVRNATTLPPACPQNLHGALPAIMLPVWFTDNLEAAATYVQNQSEDCLYLNLYVPTEDGPLTKKRDEATLNPPDTDIRDPGKKPVMLFLHGGSYMEGTGNMFDGSVLAAYGNVIVATLNYRLGVLGFLSTGDQAAKGNYGLLDQIQALRWLSENIAHFGGDPERITIFGSGAGASCVNLLILSHHSEGLFQKAIAQSGTAISSWSVNYQPLKYTRLLAAKVGCDREDSAEAVECLRRKPSRELVDQDVQPARYHIAFGPVVDGDVVPDDPEILMQQGEFLNYDMLIGVNQGEGLKFVEDSAESEDGVSASAFDFTVSNFVDNLYGYPEGKDVLRETIKFMYTDWADRDNGEMRRKTLLALFTDHQWVAPAVATAKLHADYQSPVYFYTFYHHCQAEGRPEWADAAHGDELPYVFGVPMVGATDLFPCNFSKNDVMLSAVVMTYWTNFAKTGDPNQPVPQDTKFIHTKPNRFEEVVWSKFNSKEKQYLHIGLKPRVRDNYRANKVAFWLELVPHLHNLHTELFTTTTRLPPYATRWPPRPPAGAPGTRRPPPPATLPPEPEPEPGPRAYDRFPGDSRDYSTELSVTVAVGASLLFLNILAFAALYYKRDRRQELRCRRLSPPGGSGSGVPGGGPLLPAAGRELPPEEELVSLQLKRGGGVGADPAEALRPACPPDYTLALRRAPDDVPLLAPGALTLLPSGLGPPPPPPPPSLHPFGPFPPPPPTATSHNNTLPHPHSTTRV.

The N-terminal stretch at 1–14 (MWLLALCLVGLAGA) is a signal peptide. Residues 15 to 677 (QRGGGGPGGG…DSRDYSTELS (663 aa)) are Extracellular-facing. 2 N-linked (GlcNAc...) asparagine glycosylation sites follow: Asn98 and Asn136. Cystine bridges form between Cys106/Cys141, Cys317/Cys328, and Cys487/Cys521. An N-linked (GlcNAc...) asparagine glycan is attached at Asn522. Residues 623–668 (PPYATRWPPRPPAGAPGTRRPPPPATLPPEPEPEPGPRAYDRFPGD) form a disordered region. Over residues 630–658 (PPRPPAGAPGTRRPPPPATLPPEPEPEPG) the composition is skewed to pro residues. A helical transmembrane segment spans residues 678–698 (VTVAVGASLLFLNILAFAALY). Residues 678–698 (VTVAVGASLLFLNILAFAALY) are required for interaction with LHFPL4. Topologically, residues 699–835 (YKRDRRQELR…LPHPHSTTRV (137 aa)) are cytoplasmic. Residues Ser713 and Ser718 each carry the phosphoserine modification. A disordered region spans residues 790 to 835 (LLPSGLGPPPPPPPPSLHPFGPFPPPPPTATSHNNTLPHPHSTTRV). The span at 795 to 818 (LGPPPPPPPPSLHPFGPFPPPPPT) shows a compositional bias: pro residues. Polar residues predominate over residues 823 to 835 (NNTLPHPHSTTRV).

This sequence belongs to the type-B carboxylesterase/lipase family. Interacts with neurexins NRXN1, NRXN2 and NRXN3. Interaction with neurexins is mediated by heparan sulfate glycan modification on neurexin. Interacts (via its C-terminus) with DLG4/PSD-95 (via PDZ domain 3). Interacts with PATJ. Interacts with GPHN. Interacts with MDGA1 and MDGA2. Found in a complex with MAGI2 and IGSF9B, where it interacts with MAGI2 (via WW 1, WW 2 and PDZ 2 domains). Identified in a complex of 720 kDa composed of LHFPL4, NLGN2, GABRA1, GABRB2, GABRG2 and GABRB3. Interacts with LHFPL4; leading to mutual regulation of the protein level and synaptic clustering. Interacts with NLGN2. As to expression, expressed in the blood vessel walls. Detected in colon, brain and pancreas islets of Langerhans (at protein level). Detected in brain, and at lower levels in pancreas islet beta cells.

Its subcellular location is the cell membrane. The protein resides in the postsynaptic cell membrane. It is found in the presynaptic cell membrane. Functionally, transmembrane scaffolding protein involved in cell-cell interactions via its interactions with neurexin family members. Mediates cell-cell interactions both in neurons and in other types of cells, such as Langerhans beta cells. Plays a role in synapse function and synaptic signal transmission, especially via gamma-aminobutyric acid receptors (GABA(A) receptors). Functions by recruiting and clustering synaptic proteins. Promotes clustering of postsynaptic GABRG2 and GPHN. Promotes clustering of postsynaptic LHFPL4. Modulates signaling by inhibitory synapses, and thereby plays a role in controlling the ratio of signaling by excitatory and inhibitory synapses and information processing. Required for normal signal amplitude from inhibitory synapses, but is not essential for normal signal frequency. May promote the initial formation of synapses, but is not essential for this. In vitro, triggers the de novo formation of presynaptic structures. Mediates cell-cell interactions between Langerhans beta cells and modulates insulin secretion. The polypeptide is Neuroligin-2 (NLGN2) (Homo sapiens (Human)).